Consider the following 1246-residue polypeptide: MASFPSPPLAAAAAAAPPRLAPGLPLAAAAVRRPSSLARRSSIALAAPANPLRCIHRRAVSPRLRRRTEAVGAASAAIGSLGEEREGCLSCFPRGRRRGRPGLARFAPCALPHTYGLSSLHSGLTGAKIRRRHVLHAAGPDEPHVASPTWSETALDKHYVDQPIGKEELEGFLNTPLPSHPKLVRGQLKNGLRYLILPNKVPANRFEAHMEVHVGSIDEEEDEQGIAHMIEHVAFLGSKKREKLLGTGARSNAYTDFHHTVFHIHSPTKTKEYGEDLLPSVLDALNEIAFHPKFSSSRVEKERRAILSELQMMNTIEYRVDCQLLQHLHSENKLSERFPIGLEEQIHKWDPDKIRRFHERWYYPANATLYLVGEIDDIPRAIREIEAVFEHTLPEGEAAPMSTASPFGAMASLFAPKLPGGLAASLTGERSPAADKIKPVKRERQAIRPPVEHKWSLPGVAQDAKPPAIFQHELIQSFSINMFCKIPVNQVQTYKDLRSVLMKRIFLSALHFRINTRYKSSNPPFTSVELDHSDSGREGCTVTTLTVTAEPQNWRSAIKVAVHEVRRLKEFGVTMGEMTRYMDALIKDSEQLAMMIDSVPSVDNLDFIMESDALRHTVMDQLQGHESLLAVAETVTLEEVNTVGAEVLEFISDYGKPDAPLPAAIVACVPKKVHMDGVGETDFEIHPEEITDSIKAGLEEPIYPEPELEVPKELITRSELEDLKLQRKPSFASLSKEENVVKIFDDETGIAQRRLSNGISINYKITQNEARVGVMRLIVGGGRATEDSESKGSVIVGVRTLSEGGCVGNFSREQVELFCVNNLINCSLESNEEFIFMEFRFALRDNGMRAAFQLLHMVLEHNVWLEDAFDRATQLYLSYYRSIPKSLERSTAHKLMLAMLNHDERFVEPSPHSLQKLTLQSVKDAVMNQFVGDNMEVSIVGDFTEEEVESCVLDYLGTVSAPKSSKTQEHIEKISFLPFPSDLHFQQVYIKDTDERACAYIAGPAPNRWGFATEGNDLFNVIRSSSGDAQVSESANTDLTERKHNDVRSHSLFFGITLSLLAEIINSRLFTTVRDSMGLTYDVSFELNLFDKLDLGWYVIAVTSTPSKVHKAVDACKGVLRGLHSNKIVERELDRAKRTLLMKHEAETKTNAYWLGLLAHLQSSSVPRKEISCIKELTMLYESATIEDLYLAYEHLKVDESSLFACIGIAGAESGEETTDDELDMGLHGMGPIGGRGLSTMTRPTT.

The transit peptide at 1 to 136 (MASFPSPPLA…AKIRRRHVLH (136 aa)) directs the protein to the chloroplast. Histidine 228 serves as a coordination point for Zn(2+). The active-site Proton acceptor is glutamate 231. A Zn(2+)-binding site is contributed by histidine 232. The active site involves glutamate 302. Residue glutamate 309 participates in Zn(2+) binding.

It belongs to the peptidase M16 family. Requires Zn(2+) as cofactor.

Its subcellular location is the plastid. It localises to the chloroplast stroma. In terms of biological role, cleaves presequences (transit peptides) from chloroplastic protein precursors. Initially recognizes a precursor by binding to the C-terminus of its transit peptide and then removes the transit peptide in a single endoproteolytic step. In a next step, pursues the cleavage of transit peptide to a subfragment form. The protein is Stromal processing peptidase, chloroplastic of Oryza sativa subsp. japonica (Rice).